An 83-amino-acid chain; its full sequence is Translational regulator CsrA (83 aa).

It belongs to the CsrA/RsmA family. In terms of assembly, homodimer; the beta-strands of each monomer intercalate to form a hydrophobic core, while the alpha-helices form wings that extend away from the core.

The protein localises to the cytoplasm. A translational regulator that binds mRNA to regulate translation initiation and/or mRNA stability. Usually binds in the 5'-UTR at or near the Shine-Dalgarno sequence preventing ribosome-binding, thus repressing translation. Its main target seems to be the major flagellin gene, while its function is anatagonized by FliW. The sequence is that of Translational regulator CsrA from Nocardioides sp. (strain ATCC BAA-499 / JS614).